The sequence spans 322 residues: p55-v-Fos-transforming protein (322 aa).

Residues 69 to 95 (APGGRGQSIGRRGKVEQLSPEEEEKRR) are disordered. Residues 91–154 (EEKRRIRRER…EKLEFILAAH (64 aa)) form the bZIP domain. Residues 93 to 113 (KRRIRRERNKMAAAKCRNRRR) are basic motif. The interval 119 to 147 (LQAETDQLEEEKSALQAEIANLLKEKEKL) is leucine-zipper. The interval 298 to 322 (AAHRKGSSSNEPSSDSLSSPTLLAL) is disordered. A compositionally biased stretch (low complexity) spans 304-316 (SSSNEPSSDSLSS).

Belongs to the bZIP family. Fos subfamily.

The protein resides in the host nucleus. This chain is p55-v-Fos-transforming protein (V-FOS), found in Galliformes.